The following is a 114-amino-acid chain: Large ribosomal subunit protein bL20c (114 aa).

Belongs to the bacterial ribosomal protein bL20 family.

It is found in the plastid. Its subcellular location is the chloroplast. Functionally, binds directly to 23S ribosomal RNA and is necessary for the in vitro assembly process of the 50S ribosomal subunit. It is not involved in the protein synthesizing functions of that subunit. The chain is Large ribosomal subunit protein bL20c (rpl20) from Guillardia theta (Cryptophyte).